We begin with the raw amino-acid sequence, 449 residues long: Methionine aminopeptidase 2 (449 aa).

Positions 1 to 91 are disordered; that stretch reads MAAQAAPELA…PRIPLTTLFP (91 aa). A compositionally biased stretch (acidic residues) spans 34-50; that stretch reads EEAENEGDSDDDRDDEQ. A compositionally biased stretch (basic residues) spans 61-75; the sequence is KKKKKKRPKKKKKTA. His-199 is a substrate binding site. A divalent metal cation contacts are provided by Asp-219, Asp-230, and His-299. His-307 lines the substrate pocket. 2 residues coordinate a divalent metal cation: Glu-335 and Glu-430.

It belongs to the peptidase M24A family. Methionine aminopeptidase eukaryotic type 2 subfamily. The cofactor is Co(2+). Zn(2+) serves as cofactor. Requires Mn(2+) as cofactor. Fe(2+) is required as a cofactor.

It localises to the cytoplasm. It carries out the reaction Release of N-terminal amino acids, preferentially methionine, from peptides and arylamides.. Functionally, cotranslationally removes the N-terminal methionine from nascent proteins. The N-terminal methionine is often cleaved when the second residue in the primary sequence is small and uncharged (Met-Ala-, Cys, Gly, Pro, Ser, Thr, or Val). The sequence is that of Methionine aminopeptidase 2 from Arthroderma benhamiae (strain ATCC MYA-4681 / CBS 112371) (Trichophyton mentagrophytes).